The sequence spans 130 residues: uncharacterized protein (130 aa).

This is an uncharacterized protein from Schizosaccharomyces pombe (strain 972 / ATCC 24843) (Fission yeast).